A 156-amino-acid polypeptide reads, in one-letter code: Cell division protein SepF (156 aa).

This sequence belongs to the SepF family. As to quaternary structure, homodimer. Interacts with FtsZ.

It is found in the cytoplasm. Functionally, cell division protein that is part of the divisome complex and is recruited early to the Z-ring. Probably stimulates Z-ring formation, perhaps through the cross-linking of FtsZ protofilaments. Its function overlaps with FtsA. This is Cell division protein SepF from Ruminiclostridium cellulolyticum (strain ATCC 35319 / DSM 5812 / JCM 6584 / H10) (Clostridium cellulolyticum).